The following is a 431-amino-acid chain: Glutamate-1-semialdehyde 2,1-aminomutase (431 aa).

K269 bears the N6-(pyridoxal phosphate)lysine mark.

This sequence belongs to the class-III pyridoxal-phosphate-dependent aminotransferase family. HemL subfamily. In terms of assembly, homodimer. Pyridoxal 5'-phosphate is required as a cofactor.

It localises to the cytoplasm. The catalysed reaction is (S)-4-amino-5-oxopentanoate = 5-aminolevulinate. It functions in the pathway porphyrin-containing compound metabolism; protoporphyrin-IX biosynthesis; 5-aminolevulinate from L-glutamyl-tRNA(Glu): step 2/2. This Francisella tularensis subsp. holarctica (strain FTNF002-00 / FTA) protein is Glutamate-1-semialdehyde 2,1-aminomutase.